The sequence spans 380 residues: uncharacterized protein (380 aa).

In terms of domain architecture, 4Fe-4S ferredoxin-type spans 287-318 (LRPKIYQDKCKNCRECLVEKYCPTFAIKRENG).

This is an uncharacterized protein from Methanocaldococcus jannaschii (strain ATCC 43067 / DSM 2661 / JAL-1 / JCM 10045 / NBRC 100440) (Methanococcus jannaschii).